The primary structure comprises 164 residues: R-phycoerythrin alpha chain (164 aa).

(2R,3E)-phycoerythrobilin-binding residues include Cys82 and Cys139.

The protein belongs to the phycobiliprotein family. Heterodimer of an alpha and a beta chain. In terms of processing, contains two covalently linked bilin chromophores.

The protein resides in the plastid. It is found in the chloroplast thylakoid membrane. Functionally, light-harvesting photosynthetic bile pigment-protein from the phycobiliprotein complex. This is R-phycoerythrin alpha chain (cpeA) from Porphyra purpurea (Red seaweed).